The following is a 106-amino-acid chain: ARAVRRRRARSRSRSRKSRSRSRSAKRSASRRRSRSAGRRRRRRTASRRRRRSASRRRSVSRRRRRRSRKSRGRRRRGRKVRRRRVKRAGRKGRRRTRRRRRRARR.

The segment at 1 to 106 (ARAVRRRRAR…TRRRRRRARR (106 aa)) is disordered.

In terms of tissue distribution, sperm.

It localises to the nucleus. The protein resides in the chromosome. This chain is Protamine, found in Phorcus turbinatus (Sea snail).